The primary structure comprises 167 residues: UPF0178 protein bll3966 (167 aa).

Belongs to the UPF0178 family.

This Bradyrhizobium diazoefficiens (strain JCM 10833 / BCRC 13528 / IAM 13628 / NBRC 14792 / USDA 110) protein is UPF0178 protein bll3966.